Reading from the N-terminus, the 540-residue chain is Zinc transporter ZIP5 (540 aa).

An N-terminal signal peptide occupies residues 1-20 (MMGSPVSHLLAGFCVWVVLG). Over 21–212 (WVGGSVPNLG…PAPPGDLLSA (192 aa)) the chain is Extracellular. Asn-50 is a glycosylation site (N-linked (GlcNAc...) asparagine). The disordered stretch occupies residues 78–101 (HGPLTGRAASPAADNSTHRPQNPE). Residues 90–101 (ADNSTHRPQNPE) are compositionally biased toward polar residues. The N-linked (GlcNAc...) asparagine glycan is linked to Asn-160. Residues 213–233 (LLQSALAVLLLSLPSPLSLLL) traverse the membrane as a helical segment. Residues 234-244 (LRLLGPRLLRP) are Cytoplasmic-facing. Residues 245–265 (LLGFLGALAVGTLCGDALLHL) traverse the membrane as a helical segment. Topologically, residues 266 to 287 (LPHAQEGRHAGPGGLPEKDLGP) are extracellular. A helical transmembrane segment spans residues 288 to 308 (GLSVLGGLFLLFVLENMLGLL). Topologically, residues 309-444 (RHRGLRPRCC…LLQSGLSFRR (136 aa)) are cytoplasmic. The segment at 324–377 (NLETRNLDPENGSGMALQPLQAAPEPGAQGQREKNSQHPPALAPPGHQGHSHGH) is disordered. Phosphoserine is present on Ser-336. Residue His-375 is modified to Pros-methylhistidine. Residues 445–465 (LLLLSLVSGALGLGGAVLGVG) traverse the membrane as a helical segment. Residues 466–470 (LSLGP) lie on the Extracellular side of the membrane. The helical transmembrane segment at 471-491 (VPLTPWVFGVTAGVFLYVALV) threads the bilayer. At 492 to 508 (DMLPALLRPPEPLPTPH) the chain is on the cytoplasmic side. Residues 509 to 529 (VLLQGLGLLLGGGLMLAITLL) traverse the membrane as a helical segment. Residues 530 to 540 (EERLLPVTTEG) are Extracellular-facing.

Belongs to the ZIP transporter (TC 2.A.5) family. Homodimer. In terms of processing, methylated at His-375 by METTL9. N-Glycosylated. In terms of tissue distribution, expressed in liver, kidney, pancreas, small intestine, colon, spleen, fetal liver and fetal kidney.

Its subcellular location is the basolateral cell membrane. It carries out the reaction Zn(2+)(in) = Zn(2+)(out). In terms of biological role, uniporter that transports zinc(2+) into polarized cells of enterocytes, pancreatic acinar and endoderm cells across the basolateral membrane and participates, notably, in zinc excretion from the intestine by the uptake of zinc from the blood into the intestine. The transport mechanism is temperature- and concentration-dependent and saturable. In addition, is also a high affinity copper transporter in vitro. Also may regulate glucose-stimulated insulin secretion (GSIS) in islets primarily through the zinc-activated SIRT1-PPARGC1A axis. Could regulate the BMP/TGF-beta (bone morphogenetic protein/transforming growth factor-beta) signaling pathway and modulates extracellular matrix (ECM) proteins of the sclera. Plays a role in eye development. In Homo sapiens (Human), this protein is Zinc transporter ZIP5.